The sequence spans 93 residues: Consomatin G2 (93 aa).

Positions 1–18 are cleaved as a signal peptide; it reads MQTAYWVMLMMMVCITAP. The propeptide occupies 19 to 69; it reads LPEGGKPNSGIRGLVPNDLTPQHTLRSLISRRQTDVLLDATLLTTPAPEQR. A disulfide bridge links C72 with C77. W74 carries the D-tryptophan modification. A propeptide spanning residues 79 to 93 is cleaved from the precursor; it reads WRPYPWRRRDLNGKR.

This sequence belongs to the conotoxin C superfamily. Consomatin family. As to expression, expressed by the venom duct.

The protein localises to the secreted. In terms of biological role, moderately activates human somatostatin receptors (SSTR) with a preferential activation of SSTR1 and SSTR4. In vivo, does not cause behavioral changes in mice within a few minutes of intracranial injection, but causes a progressive loss of movement thereafter. Four to five hours after injection, mice recover, even with the highest dose tested. Shows antinociception and antihyperalgesia activities in two mouse models of acute pain, most probably by acting outside the central nervous system. This chain is Consomatin G2, found in Conus geographus (Geography cone).